The chain runs to 467 residues: Coiled-coil domain-containing protein 71 (467 aa).

Positions 81 to 105 (PSQTKLQARAPNPTATSPPASAPRT) are disordered. Positions 88–105 (ARAPNPTATSPPASAPRT) are enriched in low complexity. Ser129 carries the phosphoserine modification. Disordered stretches follow at residues 211–280 (KLRK…GTKT) and 349–416 (VRAK…KAWL). The span at 253–265 (GHQSKTNRATGSP) shows a compositional bias: polar residues. The stretch at 279 to 359 (KTAQAKVART…RAKAKVARTQ (81 aa)) forms a coiled coil. A compositionally biased stretch (basic residues) spans 349 to 380 (VRAKAKVARTQPRGRGRPKGSAKARTTRKGQK). Basic and acidic residues predominate over residues 392–401 (RAEEAKDLPP).

The polypeptide is Coiled-coil domain-containing protein 71 (CCDC71) (Homo sapiens (Human)).